We begin with the raw amino-acid sequence, 244 residues long: Haloacid dehalogenase-like hydrolase domain-containing protein 3 (244 aa).

This sequence belongs to the HAD-like hydrolase superfamily.

The polypeptide is Haloacid dehalogenase-like hydrolase domain-containing protein 3 (hdhd3) (Xenopus laevis (African clawed frog)).